Here is a 299-residue protein sequence, read N- to C-terminus: Tryptophan prenyltransferase ComQ (299 aa).

Mg(2+) contacts are provided by Asp67 and Asp71.

Belongs to the FPP/GGPP synthase family. Mg(2+) serves as cofactor.

It is found in the cell membrane. It carries out the reaction L-tryptophyl-[protein] + (2E,6E)-farnesyl diphosphate = (2S,3R)-3-farnesyl-2,3-dihydro-2,N(alpha)-cyclo-L-tryptophyl-[protein] + diphosphate. In terms of biological role, part of a major quorum-sensing system that regulates the development of genetic competence. Involved in the maturation of the competence pheromone ComX. Acts by catalyzing the transfer of a farnesyl group on the ComX pheromone. Shows weak geranylation activity with geranyl diphosphate (GPP). This chain is Tryptophan prenyltransferase ComQ, found in Bacillus subtilis (strain 168).